Here is a 390-residue protein sequence, read N- to C-terminus: Succinate--CoA ligase [ADP-forming] subunit beta (390 aa).

Residues 9–244 (KEIFRKYGVP…LDEEEPTEVE (236 aa)) form the ATP-grasp domain. ATP contacts are provided by residues Lys-46, 53-55 (GRG), Glu-99, Ala-102, and Glu-107. Mg(2+)-binding residues include Asn-199 and Asp-213. Residues Asn-264 and 321-323 (GIV) each bind substrate.

Belongs to the succinate/malate CoA ligase beta subunit family. Heterotetramer of two alpha and two beta subunits. The cofactor is Mg(2+).

It carries out the reaction succinate + ATP + CoA = succinyl-CoA + ADP + phosphate. It catalyses the reaction GTP + succinate + CoA = succinyl-CoA + GDP + phosphate. Its pathway is carbohydrate metabolism; tricarboxylic acid cycle; succinate from succinyl-CoA (ligase route): step 1/1. Functionally, succinyl-CoA synthetase functions in the citric acid cycle (TCA), coupling the hydrolysis of succinyl-CoA to the synthesis of either ATP or GTP and thus represents the only step of substrate-level phosphorylation in the TCA. The beta subunit provides nucleotide specificity of the enzyme and binds the substrate succinate, while the binding sites for coenzyme A and phosphate are found in the alpha subunit. The chain is Succinate--CoA ligase [ADP-forming] subunit beta from Nautilia profundicola (strain ATCC BAA-1463 / DSM 18972 / AmH).